The following is a 153-amino-acid chain: uncharacterized protein (153 aa).

The signal sequence occupies residues 1–22 (MKAFNKLFSLVVASVLVFSLAG). Residue Cys-23 is the site of N-palmitoyl cysteine attachment. Residue Cys-23 is the site of S-diacylglycerol cysteine attachment.

This sequence to L.monocytogenes lmo0207.

Its subcellular location is the cell membrane. This is an uncharacterized protein from Escherichia coli (strain K12).